The chain runs to 1014 residues: MVHHYSMSCPDLEAIEQVEWEFSRQLSRRRLEQELGSREAAADLSELSEGEKDGKPDTHPPPAAAAAEAAADDGGGGDHQQQQQQPPPHQLSRFARINSDPRIVSDEEEEVTTDRNLYIVLISIHGLVRGENMELGRDSDTGGQVKYVVELARALAATPGVHRVDLLTRQISCPDVDWTYGEPVEMLTVPAADADDEDGGGGSSGGAYIVRLPCGPRDKYLPKESLWPHIPEFVDRALAHVTNVARALGEQLSPPPPSDGAGAAAQAVWPYVIHGHYADAAEVAALLASALNVPMVMTGHSLGRNKLEQLLKLGRMPRAEIQGTYKIARRIEAEETGLDAADMVVTSTKQEIEEQWGLYDGFDLKVERKLRVRRRRGVSCLGRYMPRMVVIPPGMDFSYVDTQDLAADGAGGAGDAADLQLLINPNKAKKPLPPIWSEVLRFFTNPHKPMILALSRPDPKKNVTTLLKAYGESRHLRELANLTLILGNRDDIEEMSGGAATVLTAVLKLIDRYDLYGQVAYPKHHKQTDVPHIYRLAAKTKGVFINPALVEPFGLTIIEAAAYGLPVVATKNGGPVDILKVLSNGLLVDPHDAAAITAALLSLLADKSRWSECRRSGLRNIHRFSWPHHCRLYLSHVAASCDHPAPHQLLRVPPSPSSSSAAAAAAGGGGAAASSEPLSDSLRDLSLRISVDAASPDLSAGDSAAAILDALRRRRSTDRPAASSAARAIGFAPGRRQSLLVVAIDCYGDDGKPNVEQLKKVVELAMSAGDGDDAGGRGYVLSTGMTIPEAVDALRACGADPAGFDALICSSGAEICYPWKGEQLAADEEYAGHVAFRWPGDHVRSAVPRLGKADGAQEADLAVDAAACSVHCHAYAAKDASKVKKVDWIRQALRMRGFRCNLVYTRACTRLNVVPLSASRPRALRYLSIQWGIDLSKVAVLVGEKGDTDRERLLPGLHRTVILPGMVAAGSEELLRDEDGFTTEDVVAMDSPNIVTLADGQDIAAAAADLLKAI.

Basic and acidic residues-rich tracts occupy residues 29-41 (RRLE…REAA) and 49-58 (EGEKDGKPDT). Disordered stretches follow at residues 29–108 (RRLE…SDEE) and 648–677 (QLLR…SSEP).

The protein belongs to the glycosyltransferase 1 family. As to quaternary structure, homodimer or homotetramer. As to expression, expressed in germinating seeds.

It catalyses the reaction beta-D-fructose 6-phosphate + UDP-alpha-D-glucose = sucrose 6(F)-phosphate + UDP + H(+). It functions in the pathway glycan biosynthesis; sucrose biosynthesis; sucrose from D-fructose 6-phosphate and UDP-alpha-D-glucose: step 1/2. Activity is regulated by phosphorylation and moderated by concentration of metabolites and light. Plays a role in photosynthetic sucrose synthesis by catalyzing the rate-limiting step of sucrose biosynthesis from UDP-glucose and fructose- 6-phosphate. Involved in the regulation of carbon partitioning in the leaves of plants. May regulate the synthesis of sucrose and therefore play a major role as a limiting factor in the export of photoassimilates out of the leaf. Plays a role for sucrose availability that is essential for plant growth and fiber elongation. The polypeptide is Probable sucrose-phosphate synthase 5 (SPS5) (Oryza sativa subsp. japonica (Rice)).